The chain runs to 358 residues: NADH-quinone oxidoreductase subunit H (358 aa).

8 helical membrane-spanning segments follow: residues 30-50 (IAVG…LIYM), 96-116 (FLYN…FACI), 129-149 (VGVF…LLAG), 168-188 (IISY…LMGT), 201-221 (GWFI…YLIA), 265-285 (FIVA…LHII), 297-317 (IPGF…LMWI), and 336-356 (YLVP…AFGF).

The protein belongs to the complex I subunit 1 family. In terms of assembly, NDH-1 is composed of 14 different subunits. Subunits NuoA, H, J, K, L, M, N constitute the membrane sector of the complex.

The protein localises to the cell inner membrane. The enzyme catalyses a quinone + NADH + 5 H(+)(in) = a quinol + NAD(+) + 4 H(+)(out). Functionally, NDH-1 shuttles electrons from NADH, via FMN and iron-sulfur (Fe-S) centers, to quinones in the respiratory chain. The immediate electron acceptor for the enzyme in this species is believed to be ubiquinone. Couples the redox reaction to proton translocation (for every two electrons transferred, four hydrogen ions are translocated across the cytoplasmic membrane), and thus conserves the redox energy in a proton gradient. This subunit may bind ubiquinone. The chain is NADH-quinone oxidoreductase subunit H from Bacteroides thetaiotaomicron (strain ATCC 29148 / DSM 2079 / JCM 5827 / CCUG 10774 / NCTC 10582 / VPI-5482 / E50).